The following is a 279-amino-acid chain: Tryptophan synthase alpha chain (279 aa).

Residues Glu50 and Asp61 each act as proton acceptor in the active site.

It belongs to the TrpA family. Tetramer of two alpha and two beta chains.

The catalysed reaction is (1S,2R)-1-C-(indol-3-yl)glycerol 3-phosphate + L-serine = D-glyceraldehyde 3-phosphate + L-tryptophan + H2O. The protein operates within amino-acid biosynthesis; L-tryptophan biosynthesis; L-tryptophan from chorismate: step 5/5. In terms of biological role, the alpha subunit is responsible for the aldol cleavage of indoleglycerol phosphate to indole and glyceraldehyde 3-phosphate. In Brucella suis (strain ATCC 23445 / NCTC 10510), this protein is Tryptophan synthase alpha chain.